A 315-amino-acid polypeptide reads, in one-letter code: Putative steroid dehydrogenase 2 (315 aa).

NADP(+) is bound at residue 47-76 (ASWAVVTGATDGIGKSYSFELARRGFNVYI). Tyr-202 is an active-site residue.

It belongs to the short-chain dehydrogenases/reductases (SDR) family. 17-beta-HSD 3 subfamily.

The chain is Putative steroid dehydrogenase 2 (stdh-2) from Caenorhabditis elegans.